The chain runs to 155 residues: Aspartate carbamoyltransferase regulatory chain (155 aa).

The Zn(2+) site is built by C111, C116, C137, and C140.

It belongs to the PyrI family. In terms of assembly, contains catalytic and regulatory chains. Zn(2+) serves as cofactor.

Involved in allosteric regulation of aspartate carbamoyltransferase. In Haloarcula marismortui (strain ATCC 43049 / DSM 3752 / JCM 8966 / VKM B-1809) (Halobacterium marismortui), this protein is Aspartate carbamoyltransferase regulatory chain.